The following is a 389-amino-acid chain: Na(+)/H(+) antiporter NhaA (389 aa).

11 helical membrane-spanning segments follow: residues 17 to 37 (ILLLVAVALAMLMANSPLAGL), 59 to 79 (LLLWINDGLMALFFLLIGLEV), 95 to 115 (SLPTFAAIGGMLVPAGIYLLF), 124 to 144 (AGWAIPAATDIAFALGIMALL), 154 to 174 (VFLLALAIIDDLGVIVIIALF), 177 to 197 (TDLSTISLIIASIAIVGLVAL), 213 to 233 (LVLWVAVLKSGVHATLAGVII), 261 to 281 (FLILPVFAFANAGVALGNMSL), 287 to 307 (PVPVGIALGLMLGKPIGVMLF), 328 to 348 (IAPVAAMCGIGFTMSMFIASL), and 363 to 383 (LGTLIGSIIAALIGYFWLSKV).

Belongs to the NhaA Na(+)/H(+) (TC 2.A.33) antiporter family.

It localises to the cell inner membrane. It catalyses the reaction Na(+)(in) + 2 H(+)(out) = Na(+)(out) + 2 H(+)(in). In terms of biological role, na(+)/H(+) antiporter that extrudes sodium in exchange for external protons. This is Na(+)/H(+) antiporter NhaA from Shewanella sp. (strain MR-7).